Consider the following 125-residue polypeptide: Large ribosomal subunit protein bL12 (125 aa).

The protein belongs to the bacterial ribosomal protein bL12 family. Homodimer. Part of the 50S ribosomal subunit; present in 6 copies per ribosome. Forms part of the ribosomal stalk which helps the ribosome interact with GTP-bound translation factors. Forms a heptameric L10(L12)2(L12)2(L12)2 complex, where L10 forms an elongated spine to which 3 L12 dimers bind in a sequential fashion.

Functionally, forms part of the ribosomal stalk which helps the ribosome interact with GTP-bound translation factors. Is thus essential for accurate translation. The protein is Large ribosomal subunit protein bL12 of Agrobacterium fabrum (strain C58 / ATCC 33970) (Agrobacterium tumefaciens (strain C58)).